Consider the following 294-residue polypeptide: Transcription termination/antitermination protein NusG (294 aa).

The disordered stretch occupies residues 1–91; the sequence is MSDPNLNDAV…EEAEPAAPVD (91 aa). A compositionally biased stretch (acidic residues) spans 25–39; the sequence is DIVEAADSVDPDQAE. Positions 40–53 are enriched in low complexity; sequence AADLAAGEPAERAA. A compositionally biased stretch (acidic residues) spans 59–85; the sequence is DDSDEDDAAAEEAVEADDESADEEEAE.

This sequence belongs to the NusG family.

Its function is as follows. Participates in transcription elongation, termination and antitermination. In Streptomyces griseus, this protein is Transcription termination/antitermination protein NusG.